Here is a 99-residue protein sequence, read N- to C-terminus: DNA-binding protein HU (99 aa).

A disordered region spans residues 63 to 82; the sequence is HRKEREGRNPKTGAKMKIDA.

The protein belongs to the bacterial histone-like protein family. Homodimer.

In terms of biological role, histone-like DNA-binding protein which is capable of wrapping DNA to stabilize it, and thus to prevent its denaturation under extreme environmental conditions. The sequence is that of DNA-binding protein HU (hup) from Rickettsia prowazekii (strain Madrid E).